The chain runs to 63 residues: Lantibiotic mutacin-1140 (63 aa).

Residues 1-41 (MSNTQLLEVLGTETFDVQEDLFAFDTTDTTIVASNDDPDTR) constitute a propeptide that is removed on maturation. Positions 44-48 (SWSLC) form a cross-link, lanthionine (Ser-Cys). Ser46 is subject to 2,3-didehydroalanine (Ser). Positions 49 to 52 (TPGC) form a cross-link, beta-methyllanthionine (Thr-Cys). Thr55 bears the 2,3-didehydrobutyrine mark. A cross-link (lanthionine (Ser-Cys)) is located at residues 57 to 62 (SFNSYC). A cross-link (S-(2-aminovinyl)-D-cysteine (Ser-Cys)) is located at residues 60–63 (SYCC).

Belongs to the type A lantibiotic family. Post-translationally, maturation of lantibiotics involves the enzymatic conversion of Thr, and Ser into dehydrated AA and the formation of thioether bonds with cysteine. The C-terminal lanthionine undergoes decarboxylation. This is followed by membrane translocation and cleavage of the modified precursor. The structure of the 2,3-didehydrobutyrine is not discussed in PubMed:11082191.

Lanthionine-containing peptide antibiotic (lantibiotic) active on Gram-positive bacteria. The bactericidal activity of lantibiotics is based on depolarization of energized bacterial cytoplasmic membranes, initiated by the formation of aqueous transmembrane pores. The chain is Lantibiotic mutacin-1140 (lanA) from Streptococcus mutans.